We begin with the raw amino-acid sequence, 352 residues long: Minor capsid protein VP2 (352 aa).

Gly-2 carries N-myristoyl glycine; by host lipidation. The tract at residues 273 to 308 (SGEFIEKFEAPGGANQRTAPQWMLPLLLGLYGSVTS) is D1. Residues 290–310 (TAPQWMLPLLLGLYGSVTSAL) traverse the membrane as a helical segment. Residues 313 to 352 (YEDGPNKKKRKLSRGSSQKTKGTSASAKARHKRRNRSSRS) are disordered. Residues 313-352 (YEDGPNKKKRKLSRGSSQKTKGTSASAKARHKRRNRSSRS) are DNA-binding. The Nuclear localization signal signature appears at 316 to 324 (GPNKKKRKL). Positions 326–338 (RGSSQKTKGTSAS) are enriched in polar residues. Over residues 340–352 (KARHKRRNRSSRS) the composition is skewed to basic residues.

This sequence belongs to the polyomaviruses capsid protein VP2 family. In terms of assembly, forms homooligomers, and heterooligomers with VP3 in the endoplasmic reticulum membrane. Interacts (via D1 domain) with VP1. As to quaternary structure, interacts (via D1 domain) with VP1. Interacts (via C-terminus) with host SP1, this is probably also the case for VP2; this interaction represses SP1 activation of the SV40 early promoter and participates in virion assembly. Interacts (via nuclear localization signal) with host importin alpha2-beta heterodimer. Oligomerizes with VP3 in the nucleus.

It is found in the virion. The protein localises to the host nucleus. Its subcellular location is the host endoplasmic reticulum. It localises to the host endoplasmic reticulum membrane. In terms of biological role, structural protein that resides within the core of the capsid surrounded by 72 VP1 pentamers. Following virus endocytosis and trafficking to the endoplasmic reticulum, VP2 and VP3 form oligomers and integrate into the endoplasmic reticulum membrane. Heterooligomer VP2-VP3 may create a viroporin for transporting the viral genome across the endoplasmic reticulum membrane to the cytoplasm. Nuclear entry of the viral DNA involves the selective exposure and importin recognition of VP2 or VP3 nuclear localization signal (shared C-terminus). Plays a role in virion assembly within the nucleus in particular through a DNA-binding domain located in the C-terminal region. An N-terminal myristoylation suggests a scaffold function for virion assembly. The viral progenies exit the cells by lytic release. Isoform VP2 may repress SP1 activation of the SV40 early promoter, via specific protein-protein and protein-DNA interactions. Structural protein that resides within the core of the capsid surrounded by 72 VP1 pentamers. Following virus entry, VP2 and VP3 form oligomers and integrate into the endoplasmic reticulum membrane. Heterooligomer VP2-VP3 may create a viroporin for transporting the viral genome across the endoplasmic reticulum membrane. Essential for focus formation and virus endoplasmic reticulum-to-cytosol membrane transport, required to recruit selective cellular components to the foci in the ER membrane. Nuclear entry of the viral DNA involves the selective exposure and importin recognition of VP2 or VP3 nuclear localization signal (shared C-terminus). Isoform VP3 represses SP1 activation of the SV40 early promoter, via specific protein-protein and protein-DNA interactions. SP1 additionally participates in recruiting VP3 to the SV40 minichromosome during SV40 assembly. Plays a role in virion assembly within the nucleus. May initiate host cell lysis when associated with VP4. Functionally, viroporin inducing perforation of cellular membranes to trigger virus progeny release. Forms pores of 3 nm inner diameter. VP4 is expressed about 24 hours after the late structural proteins and is not incorporated into the mature virion. This chain is Minor capsid protein VP2, found in Simian virus 40 (SV40).